The chain runs to 487 residues: Bifunctional protein HldE (487 aa).

The segment at 1-329 is ribokinase; it reads MLHAVETAFY…GALLTDATYE (329 aa). Residue 204–207 participates in ATP binding; it reads NRGE. The active site involves Asp274. Residues 356-487 form a cytidylyltransferase region; it reads FTNGCFDLLH…GIVQRISAQK (132 aa).

The protein in the N-terminal section; belongs to the carbohydrate kinase PfkB family. It in the C-terminal section; belongs to the cytidylyltransferase family. As to quaternary structure, homodimer.

The catalysed reaction is D-glycero-beta-D-manno-heptose 7-phosphate + ATP = D-glycero-beta-D-manno-heptose 1,7-bisphosphate + ADP + H(+). It catalyses the reaction D-glycero-beta-D-manno-heptose 1-phosphate + ATP + H(+) = ADP-D-glycero-beta-D-manno-heptose + diphosphate. It participates in nucleotide-sugar biosynthesis; ADP-L-glycero-beta-D-manno-heptose biosynthesis; ADP-L-glycero-beta-D-manno-heptose from D-glycero-beta-D-manno-heptose 7-phosphate: step 1/4. It functions in the pathway nucleotide-sugar biosynthesis; ADP-L-glycero-beta-D-manno-heptose biosynthesis; ADP-L-glycero-beta-D-manno-heptose from D-glycero-beta-D-manno-heptose 7-phosphate: step 3/4. Functionally, catalyzes the phosphorylation of D-glycero-D-manno-heptose 7-phosphate at the C-1 position to selectively form D-glycero-beta-D-manno-heptose-1,7-bisphosphate. Catalyzes the ADP transfer from ATP to D-glycero-beta-D-manno-heptose 1-phosphate, yielding ADP-D-glycero-beta-D-manno-heptose. The polypeptide is Bifunctional protein HldE (Magnetococcus marinus (strain ATCC BAA-1437 / JCM 17883 / MC-1)).